The sequence spans 304 residues: Small ribosomal subunit protein uS2 (304 aa).

S2 bears the N-acetylserine mark. Laminin-binding stretches follow at residues 161-180 (IPCNNKGHHSVGLMWWMLAR) and 205-229 (RDPEEIEKEEQAAAEKAVGKEEFQG). 5 [DE]-W-[ST] repeats span residues 230-232 (EWS), 245-247 (DWS), 275-277 (DWS), 284-286 (DWS), and 302-304 (DWS). Positions 242–304 (EVADWSEGVA…DWGGATSDWS (63 aa)) are laminin-binding. Positions 257–304 (IQQFPAGTPAPAPAVKTEDWSTQPATEDWSTAPTAQASDWGGATSDWS) are disordered. The span at 276–293 (WSTQPATEDWSTAPTAQA) shows a compositional bias: polar residues.

This sequence belongs to the universal ribosomal protein uS2 family. In terms of assembly, monomer (37LRP) and homodimer (67LR). Component of the small ribosomal subunit. Mature ribosomes consist of a small (40S) and a large (60S) subunit. The 40S subunit contains about 33 different proteins and 1 molecule of RNA (18S). The 60S subunit contains about 49 different proteins and 3 molecules of RNA (28S, 5.8S and 5S). Interacts with rps21. Interacts with several laminins including at least lamb1. Interacts with mdk. Post-translationally, acylated. Acylation may be a prerequisite for conversion of the monomeric 37 kDa laminin receptor precursor (37LRP) to the mature dimeric 67 kDa laminin receptor (67LR), and may provide a mechanism for membrane association. In terms of processing, cleaved by stromelysin-3 (ST3) at the cell surface. Cleavage by stromelysin-3 may be a mechanism to alter cell-extracellular matrix interactions.

It localises to the cell membrane. Its subcellular location is the cytoplasm. The protein localises to the nucleus. In terms of biological role, required for the assembly and/or stability of the 40S ribosomal subunit. Required for the processing of the 20S rRNA-precursor to mature 18S rRNA in a late step of the maturation of 40S ribosomal subunits. Also functions as a cell surface receptor for laminin. Plays a role in cell adhesion to the basement membrane and in the consequent activation of signaling transduction pathways. May play a role in cell fate determination and tissue morphogenesis. The protein is Small ribosomal subunit protein uS2 (rpsa) of Sparus aurata (Gilthead sea bream).